The following is a 188-amino-acid chain: Mitochondrial import receptor subunit TOM20 homolog (188 aa).

Residues M1–N12 lie on the Mitochondrial intermembrane side of the membrane. The chain crosses the membrane as a helical span at residues V13–F31. Topologically, residues D32–E188 are cytoplasmic. Disordered regions lie at residues K42–D73 and D156–E188. Residues M58 to G67 are compositionally biased toward low complexity.

This sequence belongs to the Tom20 family. As to quaternary structure, forms part of the preprotein translocase complex of the outer mitochondrial membrane (TOM complex).

The protein localises to the mitochondrion outer membrane. In terms of biological role, central component of the receptor complex responsible for the recognition and translocation of cytosolically synthesized mitochondrial preproteins. Together with tomm-22 functions as the transit peptide receptor at the surface of the mitochondrion outer membrane and facilitates the movement of preproteins into the translocation pore. The protein is Mitochondrial import receptor subunit TOM20 homolog of Caenorhabditis elegans.